We begin with the raw amino-acid sequence, 156 residues long: 6,7-dimethyl-8-ribityllumazine synthase (156 aa).

Residues F24, 58–60 (AFE), and 82–84 (VII) each bind 5-amino-6-(D-ribitylamino)uracil. 87-88 (ST) lines the (2S)-2-hydroxy-3-oxobutyl phosphate pocket. H90 (proton donor) is an active-site residue. F115 is a binding site for 5-amino-6-(D-ribitylamino)uracil. R129 contributes to the (2S)-2-hydroxy-3-oxobutyl phosphate binding site.

This sequence belongs to the DMRL synthase family.

It catalyses the reaction (2S)-2-hydroxy-3-oxobutyl phosphate + 5-amino-6-(D-ribitylamino)uracil = 6,7-dimethyl-8-(1-D-ribityl)lumazine + phosphate + 2 H2O + H(+). It participates in cofactor biosynthesis; riboflavin biosynthesis; riboflavin from 2-hydroxy-3-oxobutyl phosphate and 5-amino-6-(D-ribitylamino)uracil: step 1/2. Catalyzes the formation of 6,7-dimethyl-8-ribityllumazine by condensation of 5-amino-6-(D-ribitylamino)uracil with 3,4-dihydroxy-2-butanone 4-phosphate. This is the penultimate step in the biosynthesis of riboflavin. This chain is 6,7-dimethyl-8-ribityllumazine synthase, found in Chlorobaculum parvum (strain DSM 263 / NCIMB 8327) (Chlorobium vibrioforme subsp. thiosulfatophilum).